The chain runs to 98 residues: C-X-C motif chemokine 10 (98 aa).

An N-terminal signal peptide occupies residues 1–21; that stretch reads MNQTAILICCLVFLTLSGIQG. The residue at position 26 (R26) is a Citrulline. 2 disulfides stabilise this stretch: C30–C57 and C32–C74.

The protein belongs to the intercrine alpha (chemokine CxC) family.

Its subcellular location is the secreted. Chemotactic for monocytes and T-lymphocytes. Binds to CXCR3. This is C-X-C motif chemokine 10 (CXCL10) from Macaca mulatta (Rhesus macaque).